The following is a 189-amino-acid chain: Movement protein p22 (189 aa).

Belongs to the tombusvirus/aureusvirus movement protein p22 family. In terms of assembly, interacts with host protein HFI22. Post-translationally, phosphorylated.

It localises to the host membrane. Its function is as follows. Cell-to-cell movement. Displays RNA-binding activity. The chain is Movement protein p22 from Capsicum annuum (Capsicum pepper).